A 295-amino-acid chain; its full sequence is (R)-phenoxypropionate/alpha-ketoglutarate-dioxygenase (295 aa).

Fe cation-binding residues include H111 and D113. 2-oxoglutarate-binding residues include T138 and W255. H270 serves as a coordination point for Fe cation. R281 provides a ligand contact to 2-oxoglutarate.

This sequence belongs to the TfdA dioxygenase family. Homotrimer. It depends on Fe cation as a cofactor. Requires L-ascorbate as cofactor.

The enzyme catalyses (R)-2-(4-chloro-2-methylphenoxy)propanoate + 2-oxoglutarate + O2 = 2-methyl-4-chlorophenol + pyruvate + succinate + CO2. It catalyses the reaction (R)-(2,4-dichlorophenoxy)propanoate + 2-oxoglutarate + O2 = 2,4-dichlorophenol + pyruvate + succinate + CO2. Its pathway is xenobiotic degradation; 2-(2,4-dichlorophenoxy)propanoate degradation. With respect to regulation, inhibited by divalent cations, most significantly by copper and nickel, and by diethylpyrocarbonate (DEPC). Functionally, involved in the degradation of the phenoxypropionate herbicides. Catalyzes the enantiospecific cleavage of the ether bond in the herbicid R-dichlorprop ((R)-2-(2,4-dichlorophenoxy)propionate)(R-2,4-DP) and R-mecoprop ((R)-2-(4-chloro-2-methylphenoxy)propionate)(R-2,4-MCPP). It can also accept (RS)-2-(2,4,5-trichlorophenoxy)propionate, (RS)-2-(4-chlorophenoxy)propionate, (RS)-2-(m-chlorophenoxy)propionate, however it can only accept 2-oxoglutarate as oxygen acceptor. This is (R)-phenoxypropionate/alpha-ketoglutarate-dioxygenase from Delftia acidovorans (Pseudomonas acidovorans).